A 269-amino-acid chain; its full sequence is Tryptophan synthase alpha chain (269 aa).

Active-site proton acceptor residues include Glu-56 and Asp-67.

The protein belongs to the TrpA family. As to quaternary structure, tetramer of two alpha and two beta chains.

It carries out the reaction (1S,2R)-1-C-(indol-3-yl)glycerol 3-phosphate + L-serine = D-glyceraldehyde 3-phosphate + L-tryptophan + H2O. It participates in amino-acid biosynthesis; L-tryptophan biosynthesis; L-tryptophan from chorismate: step 5/5. Its function is as follows. The alpha subunit is responsible for the aldol cleavage of indoleglycerol phosphate to indole and glyceraldehyde 3-phosphate. This Mycobacterium ulcerans (strain Agy99) protein is Tryptophan synthase alpha chain.